We begin with the raw amino-acid sequence, 245 residues long: NAD(P)H-quinone oxidoreductase subunit K (245 aa).

[4Fe-4S] cluster is bound by residues C58, C59, C123, and C154.

Belongs to the complex I 20 kDa subunit family. As to quaternary structure, NDH-1 can be composed of about 15 different subunits; different subcomplexes with different compositions have been identified which probably have different functions. Requires [4Fe-4S] cluster as cofactor.

The protein localises to the cellular thylakoid membrane. It carries out the reaction a plastoquinone + NADH + (n+1) H(+)(in) = a plastoquinol + NAD(+) + n H(+)(out). The catalysed reaction is a plastoquinone + NADPH + (n+1) H(+)(in) = a plastoquinol + NADP(+) + n H(+)(out). Functionally, NDH-1 shuttles electrons from an unknown electron donor, via FMN and iron-sulfur (Fe-S) centers, to quinones in the respiratory and/or the photosynthetic chain. The immediate electron acceptor for the enzyme in this species is believed to be plastoquinone. Couples the redox reaction to proton translocation, and thus conserves the redox energy in a proton gradient. Cyanobacterial NDH-1 also plays a role in inorganic carbon-concentration. The protein is NAD(P)H-quinone oxidoreductase subunit K of Nostoc sp. (strain PCC 7120 / SAG 25.82 / UTEX 2576).